The chain runs to 89 residues: MILMITSTTDNLEGFKIVKYLGVVIGYGDDPDDALEDLIDVAEDMGANAVIGIRISNELTTEIISDENYAVPELTYYAYGTAVIVEKID.

The protein belongs to the UPF0145 family. Highly divergent.

The chain is UPF0145 protein MJ1170 from Methanocaldococcus jannaschii (strain ATCC 43067 / DSM 2661 / JAL-1 / JCM 10045 / NBRC 100440) (Methanococcus jannaschii).